The following is a 108-amino-acid chain: Protein YcgL (108 aa).

The region spanning 12–96 (MFCVIYRSSK…PPEDLLKQHL (85 aa)) is the YcgL domain.

This is Protein YcgL from Escherichia coli O127:H6 (strain E2348/69 / EPEC).